Here is a 185-residue protein sequence, read N- to C-terminus: Ribosome-recycling factor (185 aa).

It belongs to the RRF family.

It localises to the cytoplasm. In terms of biological role, responsible for the release of ribosomes from messenger RNA at the termination of protein biosynthesis. May increase the efficiency of translation by recycling ribosomes from one round of translation to another. This chain is Ribosome-recycling factor, found in Enterococcus faecalis (strain ATCC 700802 / V583).